Reading from the N-terminus, the 197-residue chain is ATP-dependent Clp protease proteolytic subunit 3 (197 aa).

S96 serves as the catalytic Nucleophile. The active site involves H121.

Belongs to the peptidase S14 family. As to quaternary structure, fourteen ClpP subunits assemble into 2 heptameric rings which stack back to back to give a disk-like structure with a central cavity, resembling the structure of eukaryotic proteasomes.

The protein localises to the cytoplasm. The catalysed reaction is Hydrolysis of proteins to small peptides in the presence of ATP and magnesium. alpha-casein is the usual test substrate. In the absence of ATP, only oligopeptides shorter than five residues are hydrolyzed (such as succinyl-Leu-Tyr-|-NHMec, and Leu-Tyr-Leu-|-Tyr-Trp, in which cleavage of the -Tyr-|-Leu- and -Tyr-|-Trp bonds also occurs).. Its function is as follows. Cleaves peptides in various proteins in a process that requires ATP hydrolysis. Has a chymotrypsin-like activity. Plays a major role in the degradation of misfolded proteins. This is ATP-dependent Clp protease proteolytic subunit 3 from Prochlorococcus marinus (strain MIT 9313).